A 258-amino-acid chain; its full sequence is NAD kinase (258 aa).

The active-site Proton acceptor is Asp45. NAD(+)-binding positions include 45–46 (DG), 117–118 (NE), Asp147, Ala155, 158–163 (TAYNYS), and Ala182.

This sequence belongs to the NAD kinase family. Requires a divalent metal cation as cofactor.

The protein resides in the cytoplasm. It catalyses the reaction NAD(+) + ATP = ADP + NADP(+) + H(+). Involved in the regulation of the intracellular balance of NAD and NADP, and is a key enzyme in the biosynthesis of NADP. Catalyzes specifically the phosphorylation on 2'-hydroxyl of the adenosine moiety of NAD to yield NADP. This chain is NAD kinase, found in Xanthomonas campestris pv. campestris (strain 8004).